Consider the following 293-residue polypeptide: Glycerophosphodiester phosphodiesterase (293 aa).

A signal peptide spans 1-26 (MRKNRILALFVLSLGLLSFMVTPVSA). The GP-PDE domain occupies 38 to 290 (ILTVAHRGAS…NYPDLFHKVK (253 aa)). The active-site Proton acceptor is histidine 43. Positions 43, 44, and 70 each coordinate sn-glycerol 3-phosphate. Positions 70 and 72 each coordinate Ca(2+). Residues histidine 85, glutamate 152, and glutamine 188 each contribute to the sn-glycerol 3-phosphate site. The active-site Proton donor is the histidine 85. Glutamate 152 lines the Ca(2+) pocket.

The protein belongs to the glycerophosphoryl diester phosphodiesterase family. Ca(2+) serves as cofactor.

The protein resides in the secreted. It carries out the reaction a sn-glycero-3-phosphodiester + H2O = an alcohol + sn-glycerol 3-phosphate + H(+). Its function is as follows. Glycerophosphodiester phosphodiesterase hydrolyzes glycerophosphodiesters into glycerol-3-phosphate (G3P) and the corresponding alcohol. Involved in wall teichoic acid (WTA) metabolism during phosphate starvation. Catalyzes the degradation of WTA, enabling the utilization of WTA as a phosphate reserve under limiting conditions. Is highly selective for the poly(gylcerol phosphate) WTA backbone and catalyzes exolytic cleavage of individual monomer units. In vitro is active toward the WTA oligomer mimics glycerophosphoglycerol (GPG) and bis-glycerophosphoglycerol (bGPG). The chain is Glycerophosphodiester phosphodiesterase from Bacillus subtilis (strain 168).